Consider the following 547-residue polypeptide: Chaperonin GroEL (547 aa).

ATP-binding positions include 30–33 (TLGP), K51, 87–91 (DGTTT), G415, 479–481 (NAA), and D495. The tract at residues 525–547 (PKEDKPDLGGGNPGGAGGMGGMM) is disordered. Positions 532–547 (LGGGNPGGAGGMGGMM) are enriched in gly residues.

The protein belongs to the chaperonin (HSP60) family. Forms a cylinder of 14 subunits composed of two heptameric rings stacked back-to-back. Interacts with the co-chaperonin GroES.

The protein localises to the cytoplasm. The catalysed reaction is ATP + H2O + a folded polypeptide = ADP + phosphate + an unfolded polypeptide.. Together with its co-chaperonin GroES, plays an essential role in assisting protein folding. The GroEL-GroES system forms a nano-cage that allows encapsulation of the non-native substrate proteins and provides a physical environment optimized to promote and accelerate protein folding. This Blochmanniella floridana protein is Chaperonin GroEL.